The primary structure comprises 454 residues: tRNA modification GTPase MnmE (454 aa).

Residues R23, E80, and K120 each contribute to the (6S)-5-formyl-5,6,7,8-tetrahydrofolate site. Residues 216 to 377 (GMKVVIAGRP…LRDHLKQSMG (162 aa)) form the TrmE-type G domain. N226 serves as a coordination point for K(+). GTP contacts are provided by residues 226 to 231 (NAGKSS), 245 to 251 (TDIAGTT), 270 to 273 (DTAG), 335 to 338 (NKAD), and 358 to 360 (SAR). S230 is a Mg(2+) binding site. 3 residues coordinate K(+): T245, I247, and T250. T251 is a binding site for Mg(2+). K454 provides a ligand contact to (6S)-5-formyl-5,6,7,8-tetrahydrofolate.

Belongs to the TRAFAC class TrmE-Era-EngA-EngB-Septin-like GTPase superfamily. TrmE GTPase family. Homodimer. Heterotetramer of two MnmE and two MnmG subunits. The cofactor is K(+).

It is found in the cytoplasm. Its function is as follows. Exhibits a very high intrinsic GTPase hydrolysis rate. Involved in the addition of a carboxymethylaminomethyl (cmnm) group at the wobble position (U34) of certain tRNAs, forming tRNA-cmnm(5)s(2)U34. This chain is tRNA modification GTPase MnmE, found in Yersinia pseudotuberculosis serotype O:1b (strain IP 31758).